Consider the following 100-residue polypeptide: Integration host factor subunit alpha (100 aa).

It belongs to the bacterial histone-like protein family. As to quaternary structure, heterodimer of an alpha and a beta chain.

Its function is as follows. This protein is one of the two subunits of integration host factor, a specific DNA-binding protein that functions in genetic recombination as well as in transcriptional and translational control. This chain is Integration host factor subunit alpha, found in Caulobacter sp. (strain K31).